Reading from the N-terminus, the 249-residue chain is Sugar fermentation stimulation protein homolog (249 aa).

It belongs to the SfsA family.

The sequence is that of Sugar fermentation stimulation protein homolog from Synechococcus sp. (strain RCC307).